The chain runs to 219 residues: Adenylate kinase (219 aa).

12 to 17 (GAGKGT) lines the ATP pocket. The NMP stretch occupies residues 32-61 (STGDMLRAAVKAGTPIGLQAKAVMDAGELV). AMP-binding positions include threonine 33, arginine 38, 59–61 (ELV), 87–90 (GYPR), and glutamine 94. Positions 128–165 (GRFSCARCGEGYHDRYKLPKVADICDVCGSKEFKRRPD) are LID. Arginine 129 is a binding site for ATP. Residues cysteine 132, cysteine 135, cysteine 152, and cysteine 155 each contribute to the Zn(2+) site. 2 residues coordinate AMP: arginine 162 and arginine 174. Alanine 202 is a binding site for ATP.

The protein belongs to the adenylate kinase family. As to quaternary structure, monomer.

The protein localises to the cytoplasm. It carries out the reaction AMP + ATP = 2 ADP. The protein operates within purine metabolism; AMP biosynthesis via salvage pathway; AMP from ADP: step 1/1. Functionally, catalyzes the reversible transfer of the terminal phosphate group between ATP and AMP. Plays an important role in cellular energy homeostasis and in adenine nucleotide metabolism. The protein is Adenylate kinase of Sphingopyxis alaskensis (strain DSM 13593 / LMG 18877 / RB2256) (Sphingomonas alaskensis).